Here is a 176-residue protein sequence, read N- to C-terminus: Adenine phosphoribosyltransferase (176 aa).

This sequence belongs to the purine/pyrimidine phosphoribosyltransferase family. As to quaternary structure, homodimer.

Its subcellular location is the cytoplasm. The enzyme catalyses AMP + diphosphate = 5-phospho-alpha-D-ribose 1-diphosphate + adenine. It functions in the pathway purine metabolism; AMP biosynthesis via salvage pathway; AMP from adenine: step 1/1. In terms of biological role, catalyzes a salvage reaction resulting in the formation of AMP, that is energically less costly than de novo synthesis. This chain is Adenine phosphoribosyltransferase, found in Borreliella burgdorferi (strain ZS7) (Borrelia burgdorferi).